A 794-amino-acid polypeptide reads, in one-letter code: Protocadherin beta-6 (794 aa).

The signal sequence occupies residues 1–27; the sequence is MMQTKVQNKKRQVAFFILLMLWGEVGS. Residues 28-688 lie on the Extracellular side of the membrane; it reads ESIQYSVLEE…AQADSLTVYL (661 aa). 5 Cadherin domains span residues 34-132, 137-241, 246-345, 350-449, and 454-559; these read VLEE…APEF, MLLK…VPEF, YEAQ…APEL, FISL…APAF, and YTLF…SPFV. N-linked (GlcNAc...) asparagine glycosylation occurs at asparagine 46. Residues cysteine 95 and cysteine 101 are joined by a disulfide bond. A glycan (N-linked (GlcNAc...) asparagine) is linked at asparagine 183. Residue asparagine 416 is glycosylated (N-linked (GlcNAc...) asparagine). N-linked (GlcNAc...) asparagine glycosylation is present at asparagine 565. One can recognise a Cadherin 6 domain in the interval 566 to 669; it reads GSAPCTELVP…LVDGFSQPYL (104 aa). A helical transmembrane segment spans residues 689–709; the sequence is VVALASVSSLFLFSVLLFVAV. Residues 710-794 are Cytoplasmic-facing; the sequence is RLCRRSRAAS…PTSRNSFPFS (85 aa). Residues 773–794 form a disordered region; sequence PPQGTEREMEETPTSRNSFPFS. Positions 784–794 are enriched in polar residues; that stretch reads TPTSRNSFPFS.

As to quaternary structure, forms homodimers in trans (molecules expressed by two different cells). Forms promiscuous heterodimers in cis (at the plasma membrane of the same cell) with other protocadherins.

It is found in the cell membrane. Its function is as follows. Calcium-dependent cell-adhesion protein involved in cells self-recognition and non-self discrimination. Thereby, it is involved in the establishment and maintenance of specific neuronal connections in the brain. The sequence is that of Protocadherin beta-6 from Homo sapiens (Human).